The sequence spans 172 residues: Small ribosomal subunit protein uS5 (172 aa).

The S5 DRBM domain maps to 17–80 (LKEKMIQVNR…DAARRDMVKV (64 aa)).

It belongs to the universal ribosomal protein uS5 family. In terms of assembly, part of the 30S ribosomal subunit. Contacts proteins S4 and S8.

With S4 and S12 plays an important role in translational accuracy. Functionally, located at the back of the 30S subunit body where it stabilizes the conformation of the head with respect to the body. This is Small ribosomal subunit protein uS5 from Methylibium petroleiphilum (strain ATCC BAA-1232 / LMG 22953 / PM1).